We begin with the raw amino-acid sequence, 253 residues long: Complement C1q subcomponent subunit B (253 aa).

Residues 1 to 25 (MKTQWGEVWTHLLLLLLGFLHVSWA) form the signal peptide. Residue Gln26 is modified to Pyrrolidone carboxylic acid. One can recognise a Collagen-like domain in the interval 29–112 (CTGPPGIPGI…GPRGPKGDSG (84 aa)). 5 positions are modified to 4-hydroxyproline: Pro33, Pro36, Pro39, Pro51, and Pro54. Residues 35–115 (IPGIPGVPGV…GPKGDSGDYG (81 aa)) form a disordered region. Residues Lys57 and Lys60 each carry the 5-hydroxylysine modification. Pro63 carries the 4-hydroxyproline modification. Lys75 carries the 5-hydroxylysine modification. The segment covering 78-96 (PGIPGTPGKVGPKGPVGPK) has biased composition (low complexity). 4-hydroxyproline occurs at positions 81 and 84. Lys90 and Lys96 each carry 5-hydroxylysine. Pro99 carries the post-translational modification 4-hydroxyproline. Lys108 bears the 5-hydroxylysine mark. Residues 115 to 253 (GATQKVAFSA…GFLLFPDMDA (139 aa)) enclose the C1q domain. A disulfide bond links Cys179 and Cys198. Ca(2+) contacts are provided by Asp199, Tyr200, and Gln206.

Core component of the complement C1 complex, a calcium-dependent complex composed of 1 molecule of the C1Q subcomplex, 2 molecules of C1R and 2 molecules of C1S. The C1Q subcomplex is composed 18 subunits: 3 chains of C1QA, C1QB, and C1QC trimerize to form 6 collagen-like triple helices connected to six globular ligand-recognition modules (C1q domain). In terms of processing, hydroxylated on lysine and proline residues. Hydroxylated lysine residues can be glycosylated. Mouse C1Q contains up to 64.0 hydroxylysine-galactosylglucose residues. Total percentage hydroxylysine residues glycosylated is 95.1%. Contains no hydroxylysine-monosaccharides. In terms of tissue distribution, highest expression in thioglycolate-activated peritoneal macrophages. Also found in spleen, thymus and heart. Very weak expression liver, kidney, lung and intestine.

Its subcellular location is the secreted. It localises to the cell surface. Its activity is regulated as follows. The C1Q subcomplex is inhibited by sulfated molecules, such as triterpenoid sulfates, heparan sulfate, or chondroitin sulfates. In terms of biological role, core component of the complement C1 complex, a multiprotein complex that initiates the classical pathway of the complement system, a cascade of proteins that leads to phagocytosis and breakdown of pathogens and signaling that strengthens the adaptive immune system. The classical complement pathway is initiated by the C1Q subcomplex of the C1 complex, which specifically binds IgG or IgM immunoglobulins complexed with antigens, forming antigen-antibody complexes on the surface of pathogens: C1QA, together with C1QB and C1QC, specifically recognizes and binds the Fc regions of IgG or IgM via its C1q domain. Immunoglobulin-binding activates the proenzyme C1R, which cleaves C1S, initiating the proteolytic cascade of the complement system. The C1Q subcomplex is activated by a hexamer of IgG complexed with antigens, while it is activated by a pentameric IgM. The C1Q subcomplex also recognizes and binds phosphatidylserine exposed on the surface of cells undergoing programmed cell death, possibly promoting activation of the complement system. The chain is Complement C1q subcomponent subunit B from Mus musculus (Mouse).